We begin with the raw amino-acid sequence, 170 residues long: Bifunctional protein PyrR (170 aa).

A PRPP-binding motif is present at residues 90–102; that stretch reads LVLVDDVLMSGRT.

It belongs to the purine/pyrimidine phosphoribosyltransferase family. PyrR subfamily.

The enzyme catalyses UMP + diphosphate = 5-phospho-alpha-D-ribose 1-diphosphate + uracil. Regulates the transcription of the pyrimidine nucleotide (pyr) operon in response to exogenous pyrimidines. In terms of biological role, also displays a weak uracil phosphoribosyltransferase activity which is not physiologically significant. The sequence is that of Bifunctional protein PyrR from Pseudomonas paraeruginosa (strain DSM 24068 / PA7) (Pseudomonas aeruginosa (strain PA7)).